The following is a 166-amino-acid chain: Disulfide bond formation protein B (166 aa).

Residues 1-11 (MQSFAFSTRAL) are Cytoplasmic-facing. Residues 12-28 (FLGLFAVCAGLLGFGLY) traverse the membrane as a helical segment. Over 29-46 (LQHAVGLEPCPMCIMQRY) the chain is Periplasmic. A disulfide bridge connects residues cysteine 38 and cysteine 41. Residues 47–63 (AFVAIALTALVAGLHGP) form a helical membrane-spanning segment. At 64 to 70 (GRRGTRA) the chain is on the cytoplasmic side. A helical membrane pass occupies residues 71 to 87 (YAAVILLLALAGGGVAL). Residues 88–143 (RQTWMQLYPPEFAECGPDLEFMLGSFPLADALPMIFQGAGDCSKVDWAFLGLSIAN) are Periplasmic-facing. An intrachain disulfide couples cysteine 102 to cysteine 129. Residues 144 to 162 (WSLVCLTLVAVFAIMMIAR) form a helical membrane-spanning segment. Over 163 to 166 (KRGG) the chain is Cytoplasmic.

It belongs to the DsbB family.

It is found in the cell inner membrane. In terms of biological role, required for disulfide bond formation in some periplasmic proteins. Acts by oxidizing the DsbA protein. The polypeptide is Disulfide bond formation protein B (Aromatoleum aromaticum (strain DSM 19018 / LMG 30748 / EbN1) (Azoarcus sp. (strain EbN1))).